The chain runs to 398 residues: MTTSAASGEPGRQRVLILGSTGSIGTQALEVIAANPDRFEVVGLAAGGGNPELLAAQRAQTGVAAVAVADPAAAEAVGDVRYSGPDAVTRLVEDTEADVVLNALVGALGLQPTLAALATGARLALANKESLVAGGPLVLKAAAPGQIVPVDSEHSAMAQCLRGGTRAELDKIVLTASGGPFLGWSAEDLKSVTPEQAGKHPTWSMGPMNTLNSATLVNKGLELIETHLLFGVDYDDIDVVVHPQSIVHSMATFTDGSTLAQASPPDMKLPIALALGWPDRIAGAAAACDFSTASTWEFLPLDNAVFPAVDLARFAGKQGGCLTAVYNSANEEAAEAFLDGRIGFPDIVETVGDVLHAADRWAAEPATVDDVLDAQRWAREQARGVVEQKSVRRGLVTK.

7 residues coordinate NADPH: T21, G22, S23, I24, G47, N50, and N127. Residue K128 participates in 1-deoxy-D-xylulose 5-phosphate binding. Residue E129 coordinates NADPH. D151 lines the Mn(2+) pocket. 1-deoxy-D-xylulose 5-phosphate-binding residues include S152, E153, S177, and H200. E153 contacts Mn(2+). NADPH is bound at residue G206. The 1-deoxy-D-xylulose 5-phosphate site is built by S213, N218, K219, and E222. Mn(2+) is bound at residue E222.

It belongs to the DXR family. Mg(2+) is required as a cofactor. Requires Mn(2+) as cofactor.

The enzyme catalyses 2-C-methyl-D-erythritol 4-phosphate + NADP(+) = 1-deoxy-D-xylulose 5-phosphate + NADPH + H(+). It functions in the pathway isoprenoid biosynthesis; isopentenyl diphosphate biosynthesis via DXP pathway; isopentenyl diphosphate from 1-deoxy-D-xylulose 5-phosphate: step 1/6. Functionally, catalyzes the NADPH-dependent rearrangement and reduction of 1-deoxy-D-xylulose-5-phosphate (DXP) to 2-C-methyl-D-erythritol 4-phosphate (MEP). The sequence is that of 1-deoxy-D-xylulose 5-phosphate reductoisomerase from Mycolicibacterium smegmatis (strain ATCC 700084 / mc(2)155) (Mycobacterium smegmatis).